Reading from the N-terminus, the 898-residue chain is Pyruvate, phosphate dikinase (898 aa).

Positions 1-355 (MAKWVYTFGA…LWMLQTRSGK (355 aa)) are N-terminal. Arginine 96 contributes to the ATP binding site. Positions 356-412 (RTAKSALKIAVDMAEEGLISKEEAVARIDPASLDQLLHPTIDPHARRDIIGSGLPAS) are linker 1. The interval 413-511 (PGAATGEIVF…TLRKGDVITI (99 aa)) is central. The residue at position 466 (threonine 466) is a Phosphothreonine; by PDRP1. The active-site Tele-phosphohistidine intermediate is the histidine 468. The tract at residues 512-546 (DGSSGQVLKGEIPMLQPELSGDFGKIMQWADASRR) is linker 2. Positions 547–898 (MTVRTNAETP…VAEVQALAAS (352 aa)) are C-terminal. Arginine 574, arginine 630, glutamate 758, glycine 779, threonine 780, asparagine 781, and aspartate 782 together coordinate substrate. Glutamate 758 serves as a coordination point for Mg(2+). Mg(2+) is bound at residue aspartate 782. The Proton donor role is filled by cysteine 844.

It belongs to the PEP-utilizing enzyme family. Homodimer. Mg(2+) serves as cofactor. Phosphorylation of Thr-466 in the dark inactivates the enzyme. Dephosphorylation upon light stimulation reactivates the enzyme.

It catalyses the reaction pyruvate + phosphate + ATP = phosphoenolpyruvate + AMP + diphosphate + H(+). Activated by light-induced dephosphorylation. Inhibited by dark-induced phosphorylation. Both reactions are catalyzed by PDRP1. In terms of biological role, catalyzes the reversible phosphorylation of pyruvate and phosphate. This is Pyruvate, phosphate dikinase (ppdK) from Rhizobium meliloti (strain 1021) (Ensifer meliloti).